The following is a 438-amino-acid chain: Glutamyl-tRNA reductase (438 aa).

Residues 49-52, Ser109, 114-116, and Gln120 contribute to the substrate site; these read TCNR and EGQ. The Nucleophile role is filled by Cys50. 197 to 202 lines the NADP(+) pocket; it reads GAGKMS.

Belongs to the glutamyl-tRNA reductase family. Homodimer.

It carries out the reaction (S)-4-amino-5-oxopentanoate + tRNA(Glu) + NADP(+) = L-glutamyl-tRNA(Glu) + NADPH + H(+). The protein operates within porphyrin-containing compound metabolism; protoporphyrin-IX biosynthesis; 5-aminolevulinate from L-glutamyl-tRNA(Glu): step 1/2. Its pathway is porphyrin-containing compound metabolism; chlorophyll biosynthesis. In terms of biological role, catalyzes the NADPH-dependent reduction of glutamyl-tRNA(Glu) to glutamate 1-semialdehyde (GSA). In Synechococcus elongatus (strain ATCC 33912 / PCC 7942 / FACHB-805) (Anacystis nidulans R2), this protein is Glutamyl-tRNA reductase.